Reading from the N-terminus, the 126-residue chain is Small ribosomal subunit protein bS6 (126 aa).

Residues 107-126 (RDRERGERSERPRDDFAPAA) are disordered.

The protein belongs to the bacterial ribosomal protein bS6 family.

Binds together with bS18 to 16S ribosomal RNA. The chain is Small ribosomal subunit protein bS6 from Caulobacter sp. (strain K31).